The following is a 172-amino-acid chain: Large ribosomal subunit protein uL10 (172 aa).

The protein belongs to the universal ribosomal protein uL10 family. As to quaternary structure, part of the ribosomal stalk of the 50S ribosomal subunit. The N-terminus interacts with L11 and the large rRNA to form the base of the stalk. The C-terminus forms an elongated spine to which L12 dimers bind in a sequential fashion forming a multimeric L10(L12)X complex.

In terms of biological role, forms part of the ribosomal stalk, playing a central role in the interaction of the ribosome with GTP-bound translation factors. This Caulobacter sp. (strain K31) protein is Large ribosomal subunit protein uL10.